Reading from the N-terminus, the 985-residue chain is Thioredoxin domain-containing protein 11 (985 aa).

Gly residues predominate over residues 1–11 (MSECGGRGGGS). The tract at residues 1-38 (MSECGGRGGGSSSSEDAEDEGGGGGGPAGSDCLSSSPT) is disordered. Positions 29–38 (GSDCLSSSPT) are enriched in low complexity. The helical transmembrane segment at 65–85 (LLCGAVALGCALLLALKFTCS) threads the bilayer. Residues 92 to 214 (IPAKPPVSFF…IEKFVRRVMK (123 aa)) form the Thioredoxin 1 domain. 2 disulfides stabilise this stretch: cysteine 469–cysteine 472 and cysteine 719–cysteine 722. In terms of domain architecture, Thioredoxin 2 spans 649–799 (LDPKQALMKL…LLRFILHHSD (151 aa)). Residues 821-919 (VLQRGHISHL…ASENLLTENT (99 aa)) adopt a coiled-coil conformation. At serine 828 the chain carries Phosphoserine. The segment at 935–985 (RDGAESLAAQREVHPKQPEPSATPQLPGSSPPPANVSATLVSERNKENRTD) is disordered.

This sequence belongs to the protein disulfide isomerase family. Interacts with the cytoplasmic part of DUOX1 and DUOX2. Interacts with TPO and CYBA. In terms of tissue distribution, widely expressed at low level. Expressed at higher level in thyroid and prostate.

It localises to the endoplasmic reticulum membrane. Functionally, may act as a redox regulator involved in DUOX proteins folding. The interaction with DUOX1 and DUOX2 suggest that it belongs to a multiprotein complex constituting the thyroid H(2)O(2) generating system. It is however not sufficient to assist DUOX1 and DUOX2 in H(2)O(2) generation. The protein is Thioredoxin domain-containing protein 11 (TXNDC11) of Homo sapiens (Human).